A 216-amino-acid chain; its full sequence is Imidazole glycerol phosphate synthase subunit HisH 1 (216 aa).

Residues Cys-4–Cys-216 form the Glutamine amidotransferase type-1 domain. Cys-84 functions as the Nucleophile in the catalytic mechanism. Catalysis depends on residues His-195 and Glu-197.

As to quaternary structure, heterodimer of HisH and HisF.

It localises to the cytoplasm. It catalyses the reaction 5-[(5-phospho-1-deoxy-D-ribulos-1-ylimino)methylamino]-1-(5-phospho-beta-D-ribosyl)imidazole-4-carboxamide + L-glutamine = D-erythro-1-(imidazol-4-yl)glycerol 3-phosphate + 5-amino-1-(5-phospho-beta-D-ribosyl)imidazole-4-carboxamide + L-glutamate + H(+). The catalysed reaction is L-glutamine + H2O = L-glutamate + NH4(+). It functions in the pathway amino-acid biosynthesis; L-histidine biosynthesis; L-histidine from 5-phospho-alpha-D-ribose 1-diphosphate: step 5/9. Functionally, IGPS catalyzes the conversion of PRFAR and glutamine to IGP, AICAR and glutamate. The HisH subunit provides the glutamine amidotransferase activity that produces the ammonia necessary to HisF for the synthesis of IGP and AICAR. This chain is Imidazole glycerol phosphate synthase subunit HisH 1 (hisH1), found in Prochlorococcus marinus (strain MIT 9313).